Consider the following 361-residue polypeptide: 3-dehydroquinate synthase (361 aa).

Residues 72-77 (SGEKEK), 130-131 (TT), K142, and K151 contribute to the NAD(+) site. Zn(2+) contacts are provided by E184, H247, and H264.

This sequence belongs to the sugar phosphate cyclases superfamily. Dehydroquinate synthase family. Co(2+) is required as a cofactor. Requires Zn(2+) as cofactor. NAD(+) serves as cofactor.

It is found in the cytoplasm. The enzyme catalyses 7-phospho-2-dehydro-3-deoxy-D-arabino-heptonate = 3-dehydroquinate + phosphate. The protein operates within metabolic intermediate biosynthesis; chorismate biosynthesis; chorismate from D-erythrose 4-phosphate and phosphoenolpyruvate: step 2/7. Functionally, catalyzes the conversion of 3-deoxy-D-arabino-heptulosonate 7-phosphate (DAHP) to dehydroquinate (DHQ). The polypeptide is 3-dehydroquinate synthase (Bacillus cereus (strain ATCC 10987 / NRS 248)).